A 223-amino-acid chain; its full sequence is Glycoprotein 42 (223 aa).

Topologically, residues 1 to 8 are intravirion; the sequence is MVSFKQVR. A helical membrane pass occupies residues 9 to 29; the sequence is VPLFTAIALVIVLLLAYFLPP. The Virion surface segment spans residues 30–223; sequence RVRGGGRVAA…CLCVSQRSNS (194 aa). 5 disulfides stabilise this stretch: Cys-99–Cys-138, Cys-102–Cys-115, Cys-128–Cys-214, Cys-132–Cys-216, and Cys-192–Cys-208. Residues 111–217 form the C-type lectin domain; sequence YKGCCFYFTK…CSFLKPCLCV (107 aa).

The protein belongs to the epstein barr virus gp42 family. Forms a complex with gp25 and gp85 via its N-terminus; this complex is used for invasion of B-lymphocytes. Interacts with human HLA-DRA and HLA-DRB1.

It localises to the virion membrane. Its subcellular location is the host membrane. Plays a role in virion attachment to host B-lymphocytes, through binding to leukocyte antigen (HLA) class II and subsequently participates in fusion of the virion with host membranes. May act as a tropism switch that directs fusion with B-lymphocytes and inhibits fusion with epithelial cells. Additionally, hampers T-cell recognition via HLA class II molecules through steric hindrance of T-cell receptor-class II-peptide interaction. Functionally, soluble gp42 inhibits HLA class II-restricted antigen presentation to T-cells through binding to immature and mature HLA class II complexes. The polypeptide is Glycoprotein 42 (Epstein-Barr virus (strain B95-8) (HHV-4)).